Reading from the N-terminus, the 396-residue chain is S-adenosylmethionine synthase 1 (396 aa).

Glu-12 is a Mg(2+) binding site. His-18 is a binding site for ATP. A K(+)-binding site is contributed by Glu-46. Glu-59 and Gln-102 together coordinate L-methionine. ATP is bound by residues 170–172, 238–241, Asp-249, 255–256, Ala-272, Lys-276, and Lys-280; these read DGK, SGRF, and RK. Residue Asp-249 participates in L-methionine binding. Lys-280 provides a ligand contact to L-methionine.

It belongs to the AdoMet synthase family. In terms of assembly, homotetramer. Mn(2+) is required as a cofactor. The cofactor is Mg(2+). It depends on Co(2+) as a cofactor. Requires K(+) as cofactor.

Its subcellular location is the cytoplasm. The catalysed reaction is L-methionine + ATP + H2O = S-adenosyl-L-methionine + phosphate + diphosphate. The protein operates within amino-acid biosynthesis; S-adenosyl-L-methionine biosynthesis; S-adenosyl-L-methionine from L-methionine: step 1/1. Catalyzes the formation of S-adenosylmethionine from methionine and ATP. The reaction comprises two steps that are both catalyzed by the same enzyme: formation of S-adenosylmethionine (AdoMet) and triphosphate, and subsequent hydrolysis of the triphosphate. In Oryza sativa subsp. japonica (Rice), this protein is S-adenosylmethionine synthase 1 (SAM1).